Consider the following 153-residue polypeptide: 6,7-dimethyl-8-ribityllumazine synthase (153 aa).

Residues Phe-22, 56–58, and 80–82 contribute to the 5-amino-6-(D-ribitylamino)uracil site; these read AFE and AVI. Residue 85–86 coordinates (2S)-2-hydroxy-3-oxobutyl phosphate; that stretch reads AT. The active-site Proton donor is the His-88. Phe-113 contacts 5-amino-6-(D-ribitylamino)uracil. Arg-127 contributes to the (2S)-2-hydroxy-3-oxobutyl phosphate binding site.

The protein belongs to the DMRL synthase family.

It carries out the reaction (2S)-2-hydroxy-3-oxobutyl phosphate + 5-amino-6-(D-ribitylamino)uracil = 6,7-dimethyl-8-(1-D-ribityl)lumazine + phosphate + 2 H2O + H(+). Its pathway is cofactor biosynthesis; riboflavin biosynthesis; riboflavin from 2-hydroxy-3-oxobutyl phosphate and 5-amino-6-(D-ribitylamino)uracil: step 1/2. Functionally, catalyzes the formation of 6,7-dimethyl-8-ribityllumazine by condensation of 5-amino-6-(D-ribitylamino)uracil with 3,4-dihydroxy-2-butanone 4-phosphate. This is the penultimate step in the biosynthesis of riboflavin. This is 6,7-dimethyl-8-ribityllumazine synthase from Clostridium tetani (strain Massachusetts / E88).